The primary structure comprises 399 residues: Enoyl-[acyl-carrier-protein] reductase [NADH] (399 aa).

NAD(+) is bound by residues 48-53 (GASTGY), 74-75 (FE), 111-112 (DA), and 139-140 (LA). Tyrosine 225 lines the substrate pocket. Tyrosine 235 acts as the Proton donor in catalysis. Residues lysine 244 and 274–276 (VVT) contribute to the NAD(+) site.

Belongs to the TER reductase family. As to quaternary structure, monomer.

The enzyme catalyses a 2,3-saturated acyl-[ACP] + NAD(+) = a (2E)-enoyl-[ACP] + NADH + H(+). It participates in lipid metabolism; fatty acid biosynthesis. Its function is as follows. Involved in the final reduction of the elongation cycle of fatty acid synthesis (FAS II). Catalyzes the reduction of a carbon-carbon double bond in an enoyl moiety that is covalently linked to an acyl carrier protein (ACP). The protein is Enoyl-[acyl-carrier-protein] reductase [NADH] of Erwinia tasmaniensis (strain DSM 17950 / CFBP 7177 / CIP 109463 / NCPPB 4357 / Et1/99).